A 126-amino-acid chain; its full sequence is Holo-[acyl-carrier-protein] synthase (126 aa).

Residues Asp9 and Glu58 each contribute to the Mg(2+) site.

The protein belongs to the P-Pant transferase superfamily. AcpS family. It depends on Mg(2+) as a cofactor.

It is found in the cytoplasm. It catalyses the reaction apo-[ACP] + CoA = holo-[ACP] + adenosine 3',5'-bisphosphate + H(+). Functionally, transfers the 4'-phosphopantetheine moiety from coenzyme A to a Ser of acyl-carrier-protein. The chain is Holo-[acyl-carrier-protein] synthase from Buchnera aphidicola subsp. Schizaphis graminum (strain Sg).